We begin with the raw amino-acid sequence, 155 residues long: Small ribosomal subunit protein uS7c (155 aa).

Belongs to the universal ribosomal protein uS7 family. In terms of assembly, part of the 30S ribosomal subunit.

Its subcellular location is the plastid. It localises to the chloroplast. One of the primary rRNA binding proteins, it binds directly to 16S rRNA where it nucleates assembly of the head domain of the 30S subunit. The chain is Small ribosomal subunit protein uS7c (rps7) from Ananas comosus (Pineapple).